The following is a 473-amino-acid chain: Spliceosome-associated protein CWC27 homolog (473 aa).

At serine 2 the chain carries N-acetylserine. Residues 11–166 enclose the PPIase cyclophilin-type domain; that stretch reads TNGKVLLKTT…NPHKIKSCEV (156 aa). Residues 177-193 are compositionally biased toward basic and acidic residues; it reads REIKRPKKEKPEEEVKK. Disordered regions lie at residues 177 to 386 and 399 to 473; these read REIK…EDQT and QAIA…KERR. A coiled-coil region spans residues 206-230; the sequence is SFGEEAEEEEEEVNRVSQSMKGKSK. Residues 231 to 241 are compositionally biased toward basic and acidic residues; that stretch reads SSHDLLKDDPH. The segment covering 257 to 266 has biased composition (acidic residues); it reads GDLDDGGEGE. Composition is skewed to basic and acidic residues over residues 267-287, 305-348, and 360-372; these read SAEHDEYIDGDEKNLMRERIA, EVEK…KRSE, and EYRREKQKYEALR. Residues 305-378 are a coiled coil; it reads EVEKKSVNRS…EALRKQQSKK (74 aa). Residue serine 347 is modified to Phosphoserine. Residues 405–419 are compositionally biased toward acidic residues; it reads PENDIPETEVEDDEG. 2 stretches are compositionally biased toward basic and acidic residues: residues 426-438 and 458-473; these read QFEDKSRKVKDAS and RREESKKLMREKKERR.

The protein belongs to the cyclophilin-type PPIase family. As to quaternary structure, part of the activated spliceosome B/catalytic step 1 spliceosome, one of the forms of the spliceosome which has a well-formed active site but still cannot catalyze the branching reaction and is composed at least of 52 proteins, the U2, U5 and U6 snRNAs and the pre-mRNA. Recruited during early steps of activated spliceosome B maturation, it is probably one of the first proteins released from this complex as he matures to the spliceosome C complex. Component of the minor spliceosome, which splices U12-type introns.

The protein localises to the nucleus. As part of the spliceosome, plays a role in pre-mRNA splicing. Probable inactive PPIase with no peptidyl-prolyl cis-trans isomerase activity. As a component of the minor spliceosome, involved in the splicing of U12-type introns in pre-mRNAs. This chain is Spliceosome-associated protein CWC27 homolog, found in Pongo abelii (Sumatran orangutan).